We begin with the raw amino-acid sequence, 421 residues long: 3-oxoacyl-[acyl-carrier-protein] synthase 2 (421 aa).

The Ketosynthase family 3 (KS3) domain maps to Met1–Arg417. Active-site for beta-ketoacyl synthase activity residues include Cys170, His311, and His347.

The protein belongs to the thiolase-like superfamily. Beta-ketoacyl-ACP synthases family. Homodimer.

The catalysed reaction is a fatty acyl-[ACP] + malonyl-[ACP] + H(+) = a 3-oxoacyl-[ACP] + holo-[ACP] + CO2. It catalyses the reaction (9Z)-hexadecenoyl-[ACP] + malonyl-[ACP] + H(+) = 3-oxo-(11Z)-octadecenoyl-[ACP] + holo-[ACP] + CO2. The protein operates within lipid metabolism; fatty acid biosynthesis. Functionally, involved in the type II fatty acid elongation cycle. Catalyzes the elongation of a wide range of acyl-ACP by the addition of two carbons from malonyl-ACP to an acyl acceptor. Can efficiently catalyze the conversion of palmitoleoyl-ACP (cis-hexadec-9-enoyl-ACP) to cis-vaccenoyl-ACP (cis-octadec-11-enoyl-ACP), an essential step in the thermal regulation of fatty acid composition. The polypeptide is 3-oxoacyl-[acyl-carrier-protein] synthase 2 (fabF) (Rhizobium meliloti (strain 1021) (Ensifer meliloti)).